A 258-amino-acid chain; its full sequence is Bidirectional sugar transporter SWEET9 (258 aa).

At 1–7 (MFLKVHE) the chain is on the extracellular side. The chain crosses the membrane as a helical span at residues 8-28 (IAFLFGLLGNIVSFGVFLSPV). The MtN3/slv 1 domain occupies 10-96 (FLFGLLGNIV…FLYILYAPRE (87 aa)). Topologically, residues 29 to 42 (PTFYGIYKKKSSKG) are cytoplasmic. A helical transmembrane segment spans residues 43 to 63 (FQSIPYICALASATLLLYYGI). Residues 64–69 (MKTHAY) lie on the Extracellular side of the membrane. A helical transmembrane segment spans residues 70-90 (LIISINTFGCFIEISYLFLYI). Residues 91–103 (LYAPREAKISTLK) are Cytoplasmic-facing. A helical membrane pass occupies residues 104–124 (LIVICNIGGLGLLILLVNLLV). Topologically, residues 125-131 (PKQHRVS) are extracellular. The helical transmembrane segment at 132-152 (TVGWVCAAYSLAVFASPLSVM) threads the bilayer. The region spanning 132–216 (TVGWVCAAYS…ILYMMYQGST (85 aa)) is the MtN3/slv 2 domain. The Cytoplasmic segment spans residues 153–165 (RKVIKTKSVEYMP). A helical membrane pass occupies residues 166-186 (FLLSLSLTLNAVMWFFYGLLI). Over 187–189 (KDK) the chain is Extracellular. A helical transmembrane segment spans residues 190-210 (FIAMPNILGFLFGVAQMILYM). Residues 211–258 (MYQGSTKTDLPTENQLANKTDVNEVPIVAVELPDVGSDNVEGSVRPMK) are Cytoplasmic-facing.

It belongs to the SWEET sugar transporter family. In terms of assembly, forms heterooligomers with SWEET1, SWEET5, SWEET8, SWEET11, SWEET13, SWEET16 and SWEET17. In terms of tissue distribution, specifically expressed in nectaries, mostly in the lower half of nectary parenchyma.

It localises to the cell membrane. The protein resides in the cytoplasmic vesicle membrane. Its subcellular location is the golgi apparatus. It is found in the trans-Golgi network membrane. In terms of biological role, mediates both low-affinity uptake and efflux of sugar across the plasma membrane. Nectary-specific sugar transporter required for nectar production by mediating the secretion of sucrose from the nectary parenchyma to the extracellular space. This chain is Bidirectional sugar transporter SWEET9, found in Arabidopsis thaliana (Mouse-ear cress).